Reading from the N-terminus, the 341-residue chain is MGELMAFLLPLIIVLMVKHSDSRTHSLRYFRLGVSDPIHGVPEFISVGYVDSHPITTYDSVTRQKEPRAPWMAENLAPDHWERYTQLLRGWQQMFKVELKRLQRHYNHSGSHTYQRMIGCELLEDGSTTGFLQYAYDGQDFLIFNKDTLSWLAVDNVAHTIKQAWEANQHELLYQKNWLEEECIAWLKRFLEYGKDTLQRTEPPLVRVNRKETFPGVTALFCKAHGFYPPEIYMTWMKNGEEIVQEIDYGDILPSGDGTYQAWASIELDPQSSNLYSCHVEHCGVHMVLQVPQESETIPLVMKAVSGSIVLVIVLAGVGVLVWRRRPREQNGAIYLPTPDR.

The N-terminal stretch at 1 to 22 (MGELMAFLLPLIIVLMVKHSDS) is a signal peptide. An alpha-1 region spans residues 23–109 (RTHSLRYFRL…KRLQRHYNHS (87 aa)). The antigen-binding cleft stretch occupies residues 23–201 (RTHSLRYFRL…EYGKDTLQRT (179 aa)). Topologically, residues 23 to 302 (RTHSLRYFRL…QESETIPLVM (280 aa)) are extracellular. Residues R31, S46, and K65 each contribute to the 5-(2-oxoethylideneamino)-6-(D-ribitylamino)uracil site. 3 residues coordinate 5-(2-oxopropylideneamino)-6-(D-ribitylamino)uracil: R31, S46, and K65. The 7-hydroxy-6-methyl-8-(1-D-ribityl)lumazine site is built by R31, S46, and K65. An 8-(9H-purin-6-yl)-2-oxa-8-azabicyclo[3.3.1]nona-3,6-diene-4,6-dicarbaldehyde-binding site is contributed by R31. Residues K65 and H80 each coordinate 8-(9H-purin-6-yl)-2-oxa-8-azabicyclo[3.3.1]nona-3,6-diene-4,6-dicarbaldehyde. K65 contributes to the 2-amino-4-oxopteridine-6-carbaldehyde binding site. Residue K65 coordinates pyridoxal. N107 carries N-linked (GlcNAc...) asparagine glycosylation. Residues 110–201 (GSHTYQRMIG…EYGKDTLQRT (92 aa)) form an alpha-2 region. 5-(2-oxoethylideneamino)-6-(D-ribitylamino)uracil contacts are provided by R116, Y174, and Q175. Positions 116, 174, and 175 each coordinate 5-(2-oxopropylideneamino)-6-(D-ribitylamino)uracil. The 7-hydroxy-6-methyl-8-(1-D-ribityl)lumazine site is built by R116, Y174, and Q175. Residue R116 participates in 8-(9H-purin-6-yl)-2-oxa-8-azabicyclo[3.3.1]nona-3,6-diene-4,6-dicarbaldehyde binding. 2 disulfide bridges follow: C120–C183 and C222–C278. The tract at residues 202-293 (EPPLVRVNRK…GVHMVLQVPQ (92 aa)) is alpha-3. Residues 203-299 (PPLVRVNRKE…QVPQESETIP (97 aa)) form the Ig-like C1-type domain. Residues 294-302 (ESETIPLVM) are connecting peptide. The chain crosses the membrane as a helical span at residues 303 to 323 (KAVSGSIVLVIVLAGVGVLVW). Over 324 to 341 (RRRPREQNGAIYLPTPDR) the chain is Cytoplasmic.

This sequence belongs to the MHC class I family. As to quaternary structure, heterotrimer that consists of MR1, B2M and a metabolite antigen. Major classes of metabolite ligands presented by MR1 include riboflavin-related antigens, pyrimidines and ribityl lumazines, nucleobase adducts and folate derivatives. Forms reversible covalent Schiff base complexes with microbial pyrimidine-based metabolite, which serves as a molecular switch triggering complete folding, stable association with B2M and translocation of the ternary complex from endoplasmic reticulum to the plasma membrane. Alternatively, forms non-Schiff base complexes with ribityl lumazines. On antigen-presenting cells, the ternary complex interacts with TCR on MR1-restricted T cells, predominantly represented by CD8-positive and CD4- and CD8-double negative MAIT cell subsets. Interacts with TAPBP and TAPBPL chaperones in the endoplasmic reticulum. TAPBP associated or not with MHC class I peptide loading complex binds ligand-free MR1 or MR1-B2M complex, providing for stable MR1 pools ready for metabolite antigen processing. TAPBPL interacts with MR1 in a ligand-independent way; this interaction may stabilize MR1 pool and facilitate ligand loading and dissociation. MR1-B2M heterodimer adopts a topology similar to classical MHC class I molecules, with alpha-1 and alpha-2 domains of MR1 forming the antigen-binding cleft composed of two alpha-helices resting on a floor of 7-stranded anti-parallel beta-pleated sheet. The ribityl moiety of pyrimidine-based antigens is recognized by Tyr-95 residue in the CDR3 alpha loop of the invariant TRAV1-2 TCR. Homodimerizes and does not associate with B2M. Post-translationally, N-glycosylated. In terms of tissue distribution, ubiquitous. Low expression is detected in peripheral blood B cells, T cells, monocytes and in bronchial epithelial cells (at protein level). Expressed in plasmablasts or plasma B cells in the lamina propria of ileum, appendix and colon (at protein level). Highly expressed on a subset of CD45-positive CD3-positive thymocytes (at protein level).

The protein resides in the cell membrane. It localises to the endoplasmic reticulum membrane. Its subcellular location is the golgi apparatus membrane. It is found in the early endosome membrane. The protein localises to the late endosome membrane. The protein resides in the secreted. With respect to regulation, inhibited by pterin-based metabolites such as 6-formylpterin (6-FP, a product of folic acid photodegradation). 6-FP competitively inhibits MAIT cell activation by 5-OP-RU. Modulated by commonly prescribed anti-inflammatory drug metabolites. Inhibited by salicilates such as 3-formylsalicylic and 5-formylsalicylic acids. Activated by diclofenac and/or its hydroxy metabolites. In terms of biological role, antigen-presenting molecule specialized in displaying microbial pyrimidine-based metabolites to alpha-beta T cell receptors (TCR) on innate-type mucosal-associated invariant T (MAIT) cells. In complex with B2M preferentially presents riboflavin-derived metabolites to semi-invariant TRAV1.2 TCRs on MAIT cells, guiding immune surveillance of the microbial metabolome at mucosal epithelial barriers. Signature pyrimidine-based microbial antigens are generated via non-enzymatic condensation of metabolite intermediates of the riboflavin pathway with by-products arising from other metabolic pathways such as glycolysis. Typical potent antigenic metabolites are 5-(2-oxoethylideneamino)-6-D-ribitylaminouracil (5-OE-RU) and 5-(2-oxopropylideneamino)-6-D-ribitylaminouracil (5-OP-RU), products of condensation of 5-amino-6-D-ribityaminouracil (5-A-RU) with glyoxal or methylglyoxal by-products, respectively. May present microbial antigens to various TRAV1-2-negative MAIT cell subsets, providing for unique recognition of diverse microbes, including pathogens that do not synthesize riboflavin. Upon antigen recognition, elicits rapid innate-type MAIT cell activation to eliminate pathogenic microbes by directly killing infected cells. During T cell development, drives thymic selection and post-thymic terminal differentiation of MAIT cells in a process dependent on commensal microflora. Acts as an immune sensor of cancer cell metabolome. May present a tumor-specific or -associated metabolite essential for cancer cell survival to a 'pan-cancer' TCR consisting of TRAV38.2-DV8*TRAJ31 alpha chain paired with a TRBV25.1*TRBJ2.3 beta chain on a non-MAIT CD8-positive T cell clone (MC.7.G5), triggering T cell-mediated killing of a wide range of cancer cell types. Functionally, allele MR1*01: Presents microbial-derived metabolite 5-OP-RU to semi-invariant TRAV1.2-TRAJ33-TRBV6.1 (A-F7) TCR on MAIT cells. Presents nucleobase carbonyl adducts generated during oxidative stress. Captures M3Ade, a nucleobase adduct composed of one adenine modified by a malondialdehyde trimer, for recognition by MR1-restricted T cell clones expressing a polyclonal TCR repertoire. Displays moderate binding affinity toward tumor-enriched pyridoxal and pyridoxal 5'-phosphate antigens. Its function is as follows. Allele MR1*04: Presents tumor-enriched metabolite pyridoxal to pan-cancer 7.G5 TCR on T cells enabling preferential recognition of cancer cells. May act as an alloantigen. This is Major histocompatibility complex class I-related protein 1 from Homo sapiens (Human).